We begin with the raw amino-acid sequence, 103 residues long: Small ribosomal subunit protein uS10 (103 aa).

Belongs to the universal ribosomal protein uS10 family. As to quaternary structure, part of the 30S ribosomal subunit.

Its function is as follows. Involved in the binding of tRNA to the ribosomes. In Xanthomonas campestris pv. campestris (strain B100), this protein is Small ribosomal subunit protein uS10.